We begin with the raw amino-acid sequence, 209 residues long: MANKKRSASSSRWLQEHFSDKYVLQAQKKGLRSRAWFKLDEIQQSDKIFKPGMTVVDLGAAPGGWSQYAVSQISDNGRVIACDLLPMDPIVGVDFLQGDFRDELVLKTLLERVGDNKVQVVMSDMAPNMSGTPAVDIPRSMYLVELALDMCRDVLAPEGSFIVKVFQGEGFDEYLREIRSLFTNVKIRKPDASRARSREVYIVATGRKL.

Residues Gly-63, Trp-65, Asp-83, Asp-99, and Asp-124 each contribute to the S-adenosyl-L-methionine site. Lys-164 (proton acceptor) is an active-site residue.

Belongs to the class I-like SAM-binding methyltransferase superfamily. RNA methyltransferase RlmE family.

The protein resides in the cytoplasm. It carries out the reaction uridine(2552) in 23S rRNA + S-adenosyl-L-methionine = 2'-O-methyluridine(2552) in 23S rRNA + S-adenosyl-L-homocysteine + H(+). In terms of biological role, specifically methylates the uridine in position 2552 of 23S rRNA at the 2'-O position of the ribose in the fully assembled 50S ribosomal subunit. The chain is Ribosomal RNA large subunit methyltransferase E from Photorhabdus laumondii subsp. laumondii (strain DSM 15139 / CIP 105565 / TT01) (Photorhabdus luminescens subsp. laumondii).